A 469-amino-acid polypeptide reads, in one-letter code: Glutamine synthetase (469 aa).

A GS beta-grasp domain is found at 13 to 97 (HEVKFVDLRF…IRCDILEPGT (85 aa)). The region spanning 105-469 (PRSIAKRAED…PVEFELYYSV (365 aa)) is the GS catalytic domain. 2 residues coordinate Mg(2+): E130 and E132. Residue E208 coordinates ATP. E213 and E221 together coordinate Mg(2+). Residues 265 to 266 (NG) and G266 each bind L-glutamate. Position 270 (H270) interacts with Mg(2+). ATP is bound by residues 272–274 (HMS) and S274. 3 residues coordinate L-glutamate: R322, E328, and R340. ATP-binding residues include R340, R345, and K353. Mg(2+) is bound at residue E358. R360 contacts L-glutamate. Residue Y398 is modified to O-AMP-tyrosine.

It belongs to the glutamine synthetase family. In terms of assembly, oligomer of 12 subunits arranged in the form of two hexagons. Mn(2+) is required as a cofactor.

It localises to the cytoplasm. It carries out the reaction L-glutamate + NH4(+) + ATP = L-glutamine + ADP + phosphate + H(+). With respect to regulation, when cellular nitrogen levels are high, the C-terminal adenylyl transferase (AT) of GlnE inhibits GlnA by covalent transfer of an adenylyl group from ATP to Tyr-398. Conversely, when nitrogen levels are low, the N-terminal adenylyl removase (AR) of GlnE activates GlnA by removing the adenylyl group by phosphorolysis. The fully adenylated enzyme complex is inactive. Functionally, catalyzes the ATP-dependent biosynthesis of glutamine from glutamate and ammonia. This chain is Glutamine synthetase, found in Salmonella typhi.